A 516-amino-acid chain; its full sequence is Propionyl-CoA carboxylase, carboxyltransferase subunit (516 aa).

The interval 1–32 (MTMEDRIDELREKREEALKGGGEDRIASQHDK) is disordered. In terms of domain architecture, CoA carboxyltransferase N-terminal spans 3–259 (MEDRIDELRE…NNVEDPPRVE (257 aa)). One can recognise a CoA carboxyltransferase C-terminal domain in the interval 263–509 (DPERVADELE…KSKRKSQPDK (247 aa)).

It belongs to the AccD/PCCB family. In terms of assembly, the propionyl coenzyme A carboxylase (PCC) complex is composed of three subunits: PccA (biotin carboxylase and biotin-carboxyl carrier), PccB (carboxyltransferase) and PccX.

The enzyme catalyses propanoyl-CoA + hydrogencarbonate + ATP = (S)-methylmalonyl-CoA + ADP + phosphate + H(+). The protein operates within metabolic intermediate metabolism; propanoyl-CoA degradation; succinyl-CoA from propanoyl-CoA: step 1/3. Part of the propionyl coenzyme A carboxylase (PCC) complex involved in propionate utilization and in the production of the poly(3-hydroxybutyrate-co-3-hydroxyvalerate)(PHBV), which is a water-insoluble biopolymer used as intracellular energy reserve material when cells grow under conditions of nutrient limitation. The complex catalyzes the carboxylation of propionyl-CoA to methylmalonyl-CoA. PCC is also able to catalyze the carboxylation of acetyl-CoA. In Haloferax mediterranei (strain ATCC 33500 / DSM 1411 / JCM 8866 / NBRC 14739 / NCIMB 2177 / R-4) (Halobacterium mediterranei), this protein is Propionyl-CoA carboxylase, carboxyltransferase subunit.